Consider the following 363-residue polypeptide: Histidine biosynthesis bifunctional protein HisB (363 aa).

Positions 1–174 (MTQPTLFIDR…AVTNIGDRQP (174 aa)) are histidinol-phosphatase. D9 (nucleophile) is an active-site residue. Mg(2+) contacts are provided by D9 and D11. D11 serves as the catalytic Proton donor. Residues C92, H94, C100, and C102 each coordinate Zn(2+). D129 provides a ligand contact to Mg(2+). Residues 175 to 363 (RYAEVVRKTK…NELPSSKGVL (189 aa)) form an imidazoleglycerol-phosphate dehydratase region.

In the N-terminal section; belongs to the histidinol-phosphatase family. It in the C-terminal section; belongs to the imidazoleglycerol-phosphate dehydratase family. Mg(2+) is required as a cofactor. Requires Zn(2+) as cofactor.

It localises to the cytoplasm. The enzyme catalyses D-erythro-1-(imidazol-4-yl)glycerol 3-phosphate = 3-(imidazol-4-yl)-2-oxopropyl phosphate + H2O. It catalyses the reaction L-histidinol phosphate + H2O = L-histidinol + phosphate. It participates in amino-acid biosynthesis; L-histidine biosynthesis; L-histidine from 5-phospho-alpha-D-ribose 1-diphosphate: step 6/9. The protein operates within amino-acid biosynthesis; L-histidine biosynthesis; L-histidine from 5-phospho-alpha-D-ribose 1-diphosphate: step 8/9. In Actinobacillus pleuropneumoniae serotype 5b (strain L20), this protein is Histidine biosynthesis bifunctional protein HisB.